A 282-amino-acid polypeptide reads, in one-letter code: Protein-export membrane protein SecF (282 aa).

The next 6 membrane-spanning stretches (helical) occupy residues M16–V36, Q126–F146, I148–A168, F169–I189, G221–L241, and V253–L273.

This sequence belongs to the SecD/SecF family. SecF subfamily. In terms of assembly, part of the protein translocation apparatus. Forms a complex with SecD.

The protein resides in the cell membrane. In terms of biological role, involved in protein export. This chain is Protein-export membrane protein SecF, found in Methanolacinia petrolearia (strain DSM 11571 / OCM 486 / SEBR 4847) (Methanoplanus petrolearius).